The chain runs to 1174 residues: PR domain zinc finger protein 15 (1174 aa).

The region spanning 75 to 185 (SNLEIRRLDD…AGTELRVWYA (111 aa)) is the SET domain. The interval 252–307 (LPAGGQQHEAASEKEPDAPRMEPPTAAESKSIQSVMVTKEPKKKPRRGRKPKASKV) is disordered. Residues 261–271 (AASEKEPDAPR) show a composition bias toward basic and acidic residues. A compositionally biased stretch (basic residues) spans 292–304 (PKKKPRRGRKPKA). C2H2-type zinc fingers lie at residues 402 to 424 (HQCG…VRSH) and 434 to 457 (FKCE…SYKH). The C2H2-type 3; degenerate zinc-finger motif lies at 468–486 (YRCGSCGKTFRMESALEFH). 2 consecutive C2H2-type zinc fingers follow at residues 495-517 (FQCE…KKKH) and 522-544 (FACE…QRRH). Lys-552 is covalently cross-linked (Glycyl lysine isopeptide (Lys-Gly) (interchain with G-Cter in SUMO2)). 2 consecutive C2H2-type zinc fingers follow at residues 571 to 593 (SGCP…LLTH) and 598 to 620 (YTCE…IHVH). Residues 639–658 (IGISSEENDDNSDESADSEP) form a disordered region. Residues 644 to 655 (EENDDNSDESAD) show a composition bias toward acidic residues. C2H2-type zinc fingers lie at residues 661–684 (YSCK…MEVH), 689–711 (HGCS…MVIH), 725–747 (HPCE…KLIH), 753–775 (HACE…MRVH), 781–803 (YLCA…MKLH), 809–831 (YECK…YKRH), 837–859 (FMCE…KLIH), and 865–888 (WTCS…QLTH). Disordered regions lie at residues 957 to 1007 (AEGK…GDET) and 1147 to 1174 (LQPP…MYSY). The span at 962–973 (GKAAKRSHKRKQ) shows a compositional bias: basic residues. Residues 1154 to 1174 (AAPQQAVQPQVQNEQQQMYSY) show a composition bias toward low complexity.

In terms of tissue distribution, expressed in embryonic stem cells (ESCs) (at protein level).

Its subcellular location is the nucleus. Sequence-specific DNA-binding transcriptional regulator. Plays a role as a molecular node in a transcriptional network regulating embryonic development and cell fate decision. Stimulates the expression of upstream key transcriptional activators and repressors of the Wnt/beta-catenin and MAPK/ERK pathways, respectively, that are essential for naive pluripotency and self-renewal maintenance of embryonic stem cells (ESCs). Specifically promotes SPRY1 and RSPO1 transcription activation through recognition and direct binding of a specific DNA sequence in their promoter regions. Also plays a role in induced pluripotent stem cells (iPSCs) reprogramming. Involved in early embryo development. The sequence is that of PR domain zinc finger protein 15 from Mus musculus (Mouse).